The following is a 133-amino-acid chain: Snaclec A9 (133 aa).

3 disulfides stabilise this stretch: C4-C15, C32-C131, and C106-C123. The region spanning 11–132 (YEGHCYKVFN…CGQPYRFTCE (122 aa)) is the C-type lectin domain.

This sequence belongs to the snaclec family. In terms of assembly, heterodimer; disulfide-linked. As to expression, expressed by the venom gland.

It is found in the secreted. Interferes with one step of hemostasis (modulation of platelet aggregation, or coagulation cascade, for example). This chain is Snaclec A9, found in Macrovipera lebetinus (Levantine viper).